A 489-amino-acid chain; its full sequence is Bypass of stop codon protein 5 (489 aa).

Positions Met-1–Glu-42 are disordered. Residues Ser-18 to Phe-30 show a composition bias toward low complexity. A phosphoserine mark is found at Ser-111 and Ser-350.

The protein belongs to the BUL1 family.

Appears to play a role in translation fidelity, and may act when translation is compromised. May be a component of the ubiquitination pathway. This Saccharomyces cerevisiae (strain ATCC 204508 / S288c) (Baker's yeast) protein is Bypass of stop codon protein 5 (BSC5).